Here is a 305-residue protein sequence, read N- to C-terminus: Protein FdhE homolog (305 aa).

It belongs to the FdhE family.

It localises to the cytoplasm. Functionally, necessary for formate dehydrogenase activity. This Stutzerimonas stutzeri (strain A1501) (Pseudomonas stutzeri) protein is Protein FdhE homolog.